Here is a 440-residue protein sequence, read N- to C-terminus: 3-phosphoshikimate 1-carboxyvinyltransferase (440 aa).

Residues Lys26, Ser27, and Arg31 each coordinate 3-phosphoshikimate. A phosphoenolpyruvate-binding site is contributed by Lys26. Phosphoenolpyruvate-binding residues include Gly99 and Arg127. Residues Ser172, Gln174, Asp320, and Lys347 each coordinate 3-phosphoshikimate. Position 174 (Gln174) interacts with phosphoenolpyruvate. Asp320 (proton acceptor) is an active-site residue. Phosphoenolpyruvate contacts are provided by Arg351 and Arg392.

Belongs to the EPSP synthase family. As to quaternary structure, monomer.

The protein resides in the cytoplasm. It catalyses the reaction 3-phosphoshikimate + phosphoenolpyruvate = 5-O-(1-carboxyvinyl)-3-phosphoshikimate + phosphate. It functions in the pathway metabolic intermediate biosynthesis; chorismate biosynthesis; chorismate from D-erythrose 4-phosphate and phosphoenolpyruvate: step 6/7. Catalyzes the transfer of the enolpyruvyl moiety of phosphoenolpyruvate (PEP) to the 5-hydroxyl of shikimate-3-phosphate (S3P) to produce enolpyruvyl shikimate-3-phosphate and inorganic phosphate. The protein is 3-phosphoshikimate 1-carboxyvinyltransferase of Xanthomonas axonopodis pv. citri (strain 306).